A 280-amino-acid chain; its full sequence is Ribulose-phosphate 3-epimerase, chloroplastic (280 aa).

The N-terminal 45 residues, 1–45 (SLGSSTLLQSQISGFGGSQKLQKISFSNPNSLTFTRRRIQTVVNA), are a transit peptide targeting the chloroplast. Residue Ser-62 participates in substrate binding. The a divalent metal cation site is built by His-87, Asp-89, and His-120. The Proton acceptor role is filled by Asp-89. Residues His-120, 198–201 (GFGG), 231–233 (DGG), and 253–254 (GS) each bind substrate. Asp-231 serves as a coordination point for a divalent metal cation. The active-site Proton donor is Asp-231.

Belongs to the ribulose-phosphate 3-epimerase family. As to quaternary structure, homohexamer. It depends on Co(2+) as a cofactor. The cofactor is Fe(2+). Mn(2+) serves as cofactor. Zn(2+) is required as a cofactor. Highest level of expression in leaves, whereas it is low in roots, tubers, and stems.

Its subcellular location is the plastid. The protein localises to the chloroplast thylakoid membrane. It carries out the reaction D-ribulose 5-phosphate = D-xylulose 5-phosphate. The protein operates within carbohydrate biosynthesis; Calvin cycle. Its function is as follows. Catalyzes the reversible epimerization of D-ribulose 5-phosphate to D-xylulose 5-phosphate. The polypeptide is Ribulose-phosphate 3-epimerase, chloroplastic (Solanum tuberosum (Potato)).